Here is a 466-residue protein sequence, read N- to C-terminus: Asparagine--tRNA ligase (466 aa).

It belongs to the class-II aminoacyl-tRNA synthetase family. Homodimer.

The protein localises to the cytoplasm. The enzyme catalyses tRNA(Asn) + L-asparagine + ATP = L-asparaginyl-tRNA(Asn) + AMP + diphosphate + H(+). In Shewanella sp. (strain MR-7), this protein is Asparagine--tRNA ligase.